The chain runs to 406 residues: Luteothin monooxygenase (406 aa).

Residues H98, R102, R296, G350, H353, and C355 each contribute to the heme b site.

It belongs to the cytochrome P450 family. As to quaternary structure, monomer. It depends on heme b as a cofactor.

The enzyme catalyses luteothin + 4 reduced [2Fe-2S]-[ferredoxin] + 2 O2 + 4 H(+) = aureothin + 4 oxidized [2Fe-2S]-[ferredoxin] + 3 H2O. Its pathway is antibiotic biosynthesis. The protein operates within polyketide biosynthesis. Its function is as follows. Bifunctional cytochrome P450 protein involved in the biosynthesis of the antibiotic aureothin, a nitroaryl polyketide metabolite with antifungal, cytotoxic and insecticidal activities. Catalyzes the hydroxylation of luteothin (also called deoxyaureothin), leading to the formation of the intermediate (7R)-7-hydroxydeoxyaureothin, followed by the formation of the aureothin tetrahydrofuran ring, the final step in the biosynthesis of aureothin. The sequence is that of Luteothin monooxygenase from Streptomyces thioluteus.